The chain runs to 38 residues: uncharacterized protein (38 aa).

Residues 10–32 (FSLLWYFLVGGGKGEVCWRFLGI) traverse the membrane as a helical segment.

It is found in the membrane. This is an uncharacterized protein from Saccharomyces cerevisiae (strain ATCC 204508 / S288c) (Baker's yeast).